The following is a 453-amino-acid chain: Cyclic GMP-AMP phosphodiesterase SMPDL3A (453 aa).

Positions 1–22 (MALVRALVCCLLTAWHCRSGLG) are cleaved as a signal peptide. Aspartate 45 and histidine 47 together coordinate Zn(2+). Cysteine 62 and cysteine 81 are joined by a disulfide. N-linked (GlcNAc...) asparagine glycosylation is present at asparagine 69. Aspartate 110 contributes to the Zn(2+) binding site. Histidine 114 lines the ATP pocket. Residue asparagine 131 is glycosylated (N-linked (GlcNAc...) asparagine). Asparagine 151 is a binding site for Zn(2+). ATP is bound by residues asparagine 151 and histidine 152. Residues asparagine 222 and asparagine 238 are each glycosylated (N-linked (GlcNAc...) asparagine). Histidine 252 contributes to the Zn(2+) binding site. Asparagine 263 is a glycosylation site (N-linked (GlcNAc...) asparagine). Residues histidine 293 and histidine 295 each coordinate Zn(2+). The N-linked (GlcNAc...) asparagine glycan is linked to asparagine 356. 2 disulfide bridges follow: cysteine 420–cysteine 424 and cysteine 430–cysteine 443. N-linked (GlcNAc...) asparagine glycosylation occurs at asparagine 437.

Belongs to the acid sphingomyelinase family. As to quaternary structure, monomer. Homodimer; homodimerizes following 2',3'-cGAMP-binding. Zn(2+) is required as a cofactor. In terms of processing, N-glycosylation is required for protein maturation, secretion and phosphodiesterase activity. As to expression, detected in blood serum. Detected in macrophages (at protein level).

It localises to the secreted. It carries out the reaction 2',3'-cGAMP + H2O = 5'-pGpA(2'-5') + H(+). The catalysed reaction is 5'-pGpA(2'-5') + H2O = 5'-GpA(2'-5') + phosphate. It catalyses the reaction a ribonucleoside 5'-triphosphate + H2O = a ribonucleoside 5'-diphosphate + phosphate + H(+). The enzyme catalyses ATP + H2O = ADP + phosphate + H(+). With respect to regulation, requires micromolar levels of Zn(2+) for activity. Inhibited by millimolar levels of Zn(2+). Cyclic-nucleotide phosphodiesterase that acts as a negative regulator of innate immunity by mediating degradation of 2',3'-cGAMP, thereby inhibiting the cGAS-STING signaling. Specifically linearizes 2',3'-cGAMP into 2'5'-bond pGpA and further hydrolyzes pGpA to produce GpA. Also has in vitro nucleotide phosphodiesterase activity with nucleoside triphosphates, such as ATP. Has in vitro activity with p-nitrophenyl-TMP. Has lower activity with nucleoside diphosphates, and no activity with nucleoside monophosphates. Has in vitro activity with CDP-choline, giving rise to CMP and phosphocholine. Has in vitro activity with CDP-ethanolamine. Does not have sphingomyelin phosphodiesterase activity. The sequence is that of Cyclic GMP-AMP phosphodiesterase SMPDL3A from Homo sapiens (Human).